A 942-amino-acid chain; its full sequence is E3 ubiquitin-protein ligase HACE1 (942 aa).

ANK repeat units lie at residues 23 to 55 (LPDDNETAVYTLMPMVMADQHRSVSELLSNSKF), 64 to 93 (VKRSLLHIAANCGSVECLVLLLKKGANPNY), 97 to 126 (SGCTPLHLAARNGQKKCMSKLLEYSADVNI), 130 to 159 (EGLTAIHWLAVNGRTELLHDLVQHVSNVDV), 163 to 192 (MGQTALHVACQNGHKTTVQCLLDSGADINR), 196 to 226 (SGATPLYFACSHGQRDTAQILLMRGAKYLPD), and 228 to 253 (NGITPLDLCVQGGYGETCEVLIQYHP). Residues 428-459 (KGPDHQDATPTPSFAAAGTESRKELSTDTGDS) are disordered. Residues 447 to 459 (ESRKELSTDTGDS) are compositionally biased toward basic and acidic residues. The HECT domain occupies 607–942 (NCAKLKQGIA…HCGSYGYTMA (336 aa)). The Glycyl thioester intermediate role is filled by Cys-909.

It localises to the golgi apparatus. The protein resides in the golgi stack membrane. The protein localises to the cytoplasm. Its subcellular location is the endoplasmic reticulum. It catalyses the reaction S-ubiquitinyl-[E2 ubiquitin-conjugating enzyme]-L-cysteine + [acceptor protein]-L-lysine = [E2 ubiquitin-conjugating enzyme]-L-cysteine + N(6)-ubiquitinyl-[acceptor protein]-L-lysine.. It functions in the pathway protein modification; protein ubiquitination. Functionally, E3 ubiquitin-protein ligase involved in Golgi membrane fusion and regulation of small GTPases. Acts as a regulator of Golgi membrane dynamics during the cell cycle: recruited to Golgi membrane by Rab proteins and regulates postmitotic Golgi membrane fusion. Acts by mediating ubiquitination during mitotic Golgi disassembly, ubiquitination serving as a signal for Golgi reassembly later, after cell division. This chain is E3 ubiquitin-protein ligase HACE1 (HACE1), found in Gallus gallus (Chicken).